A 127-amino-acid chain; its full sequence is UPF0325 protein VC_2264 (127 aa).

This sequence belongs to the UPF0325 family.

The protein is UPF0325 protein VC_2264 of Vibrio cholerae serotype O1 (strain ATCC 39315 / El Tor Inaba N16961).